Reading from the N-terminus, the 237-residue chain is Ly6/PLAUR domain-containing protein 8 (237 aa).

Residues 1 to 19 (MKGILVAGITAVLVAAVES) form the signal peptide. N45, N73, N107, N118, N132, N172, N175, and N185 each carry an N-linked (GlcNAc...) asparagine glycan. The 52-residue stretch at 125–176 (CPACYESNGTSCHGKPWKCYEEEQCVFLVAELKNDIESKSLVLKGCSNVSNA) folds into the UPAR/Ly6 domain. N215 carries the GPI-anchor amidated asparagine lipid modification. A propeptide spans 216–237 (VGSKASLYLLALASLLLRGLLP) (removed in mature form).

Belongs to the CNF-like-inhibitor family. Post-translationally, highly N-glycosylated. Not O-glycosylated. In terms of processing, GPI-anchored. The GPI-anchor is cleaved, leading to secretion into the colonic lumen. Expressed in the large intestine. Preferentially expressed on the epithelial layer exposed to the lumen (at protein level).

Its subcellular location is the cell membrane. The protein localises to the secreted. Functionally, secreted protein specifically required to prevent invasion of Gram-negative bacteria in the inner mucus layer of the colon epithelium, a portion of the large intestine which is free of commensal microbiota. Prevents invasion of flagellated microbiota by binding to the flagellum of bacteria, such as P.mirabilis, thereby inhibiting bacterial motility in the intestinal lumen. Segregation of intestinal bacteria and epithelial cells in the colon is required to preserve intestinal homeostasis. The polypeptide is Ly6/PLAUR domain-containing protein 8 (Homo sapiens (Human)).